Here is a 219-residue protein sequence, read N- to C-terminus: Abasic site processing protein YobE (219 aa).

Cysteine 2 acts as the Nucleophile in catalysis. Cysteine 2 bears the Thiazolidine linkage to a ring-opened DNA abasic site mark. Glutamate 106 is a catalytic residue.

This sequence belongs to the SOS response-associated peptidase family.

Its activity is regulated as follows. Formation and reversal of DNA-protein cross-link depends on DNA context. Catalyzes formation of the thiazolidine linkage in presence of abasic sites in single-stranded DNA. Mediates the reversal of the thiazolidine cross-link in presence of double stranded DNA. In terms of biological role, sensor of abasic sites in single-stranded DNA (ssDNA) required to preserve genome integrity by promoting error-free repair of abasic sites. Recognizes and binds abasic sites in ssDNA at replication forks and chemically modifies the lesion by forming a covalent cross-link with DNA: forms a stable thiazolidine linkage between a ring-opened abasic site and the alpha-amino and sulfhydryl substituents of its N-terminal catalytic cysteine residue. The DNA-protein cross-link is then reversed: able to catalyze the reversal of the thiazolidine cross-link and cycle between a cross-link and a non-cross-linked state depending on DNA context: mediates self-reversal of the thiazolidine cross-link in double stranded DNA. May act as a protease: mediates autocatalytic processing of its N-terminal methionine in order to expose the catalytic cysteine. This Bacillus subtilis (strain 168) protein is Abasic site processing protein YobE (yobE).